The sequence spans 189 residues: Parkinson disease protein 7 homolog (189 aa).

The residue at position 2 (Ala2) is an N-acetylalanine. Residues Cys46 and Cys53 are each lipidated (S-palmitoyl cysteine). The residue at position 67 (Tyr67) is a Phosphotyrosine. The Nucleophile role is filled by Cys106. Cys106 is subject to Cysteine sulfinic acid (-SO2H); alternate. A lipid anchor (S-palmitoyl cysteine; alternate) is attached at Cys106. The active site involves His126. Lys130 is covalently cross-linked (Glycyl lysine isopeptide (Lys-Gly) (interchain with G-Cter in SUMO)). The residue at position 148 (Lys148) is an N6-acetyllysine. N6-succinyllysine is present on Lys182.

It belongs to the peptidase C56 family. Homodimer. Binds EFCAB6/DJBP and PIAS2. Part of a ternary complex containing PARK7, EFCAB6/DJBP and AR. Interacts (via N-terminus) with OTUD7B. Interacts with BBS1, HIPK1, CLCF1 and MTERF. Forms a complex with PINK1 and PRKN. Interacts (via C-terminus) with NCF1; the interaction is enhanced by LPS and modulates NCF1 phosphorylation and membrane translocation. Interacts with NENF. It depends on Deglycase activity does not require glutathione as a cofactor, however, glycated glutathione constitutes a PARK7 substrate. as a cofactor. In terms of processing, sumoylated on Lys-130 by PIAS2 or PIAS4; which is essential for cell-growth promoting activity and transforming activity. Undergoes cleavage of a C-terminal peptide and subsequent activation of protease activity in response to oxidative stress.

Its subcellular location is the cell membrane. The protein localises to the cytoplasm. It localises to the nucleus. It is found in the membrane raft. The protein resides in the mitochondrion. Its subcellular location is the endoplasmic reticulum. The enzyme catalyses N(omega)-(1-hydroxy-2-oxopropyl)-L-arginyl-[protein] + H2O = lactate + L-arginyl-[protein] + H(+). It carries out the reaction N(6)-(1-hydroxy-2-oxopropyl)-L-lysyl-[protein] + H2O = lactate + L-lysyl-[protein] + H(+). It catalyses the reaction S-(1-hydroxy-2-oxopropyl)-L-cysteinyl-[protein] + H2O = lactate + L-cysteinyl-[protein] + H(+). The catalysed reaction is N(omega)-(1-hydroxy-2-oxoethyl)-L-arginyl-[protein] + H2O = L-arginyl-[protein] + glycolate + H(+). The enzyme catalyses N(6)-(1-hydroxy-2-oxoethyl)-L-lysyl-[protein] + H2O = glycolate + L-lysyl-[protein] + H(+). It carries out the reaction S-(1-hydroxy-2-oxoethyl)-L-cysteinyl-[protein] + H2O = glycolate + L-cysteinyl-[protein] + H(+). It catalyses the reaction N(2)-(1-hydroxy-2-oxopropyl)-dGTP + H2O = lactate + dGTP + H(+). The catalysed reaction is N(2)-(1-hydroxy-2-oxopropyl)-GTP + H2O = lactate + GTP + H(+). The enzyme catalyses N(2)-(1-hydroxy-2-oxopropyl)-GDP + H2O = lactate + GDP + H(+). It carries out the reaction N(2)-(1-hydroxy-2-oxopropyl)-GMP + H2O = lactate + GMP + H(+). It catalyses the reaction N(2)-(1-hydroxy-2-oxoethyl)-dGTP + H2O = dGTP + glycolate + H(+). The catalysed reaction is N(2)-(1-hydroxy-2-oxoethyl)-GTP + H2O = glycolate + GTP + H(+). The enzyme catalyses N(2)-(1-hydroxy-2-oxoethyl)-GDP + H2O = glycolate + GDP + H(+). It carries out the reaction N(2)-(1-hydroxy-2-oxoethyl)-GMP + H2O = glycolate + GMP + H(+). It catalyses the reaction an N(2)-(1-hydroxy-2-oxopropyl)-guanosine in RNA + H2O = a guanosine in RNA + lactate + H(+). The catalysed reaction is an N(2)-(1-hydroxy-2-oxopropyl)-2'-deoxyguanosine in DNA + H2O = a 2'-deoxyguanosine in DNA + lactate + H(+). The enzyme catalyses an N(2)-(1-hydroxy-2-oxoethyl)-guanosine in RNA + H2O = a guanosine in RNA + glycolate + H(+). It carries out the reaction an N(2)-(1-hydroxy-2-oxoethyl)-2'-deoxyguanosine in DNA + H2O = a 2'-deoxyguanosine in DNA + glycolate + H(+). Multifunctional protein with controversial molecular function which plays an important role in cell protection against oxidative stress and cell death acting as oxidative stress sensor and redox-sensitive chaperone and protease. It is involved in neuroprotective mechanisms like the stabilization of NFE2L2 and PINK1 proteins, male fertility as a positive regulator of androgen signaling pathway as well as cell growth and transformation through, for instance, the modulation of NF-kappa-B signaling pathway. Has been described as a protein and nucleotide deglycase that catalyzes the deglycation of the Maillard adducts formed between amino groups of proteins or nucleotides and reactive carbonyl groups of glyoxals. But this function is rebuted by other works. As a protein deglycase, repairs methylglyoxal- and glyoxal-glycated proteins, and releases repaired proteins and lactate or glycolate, respectively. Deglycates cysteine, arginine and lysine residues in proteins, and thus reactivates these proteins by reversing glycation by glyoxals. Acts on early glycation intermediates (hemithioacetals and aminocarbinols), preventing the formation of advanced glycation endproducts (AGE) that cause irreversible damage. Also functions as a nucleotide deglycase able to repair glycated guanine in the free nucleotide pool (GTP, GDP, GMP, dGTP) and in DNA and RNA. Is thus involved in a major nucleotide repair system named guanine glycation repair (GG repair), dedicated to reversing methylglyoxal and glyoxal damage via nucleotide sanitization and direct nucleic acid repair. Protects histones from adduction by methylglyoxal, controls the levels of methylglyoxal-derived argininine modifications on chromatin. Able to remove the glycations and restore histone 3, histone glycation disrupts both local and global chromatin architecture by altering histone-DNA interactions as well as histone acetylation and ubiquitination levels. Displays a very low glyoxalase activity that may reflect its deglycase activity. Eliminates hydrogen peroxide and protects cells against hydrogen peroxide-induced cell death. Required for correct mitochondrial morphology and function as well as for autophagy of dysfunctional mitochondria. Plays a role in regulating expression or stability of the mitochondrial uncoupling proteins SLC25A14 and SLC25A27 in dopaminergic neurons of the substantia nigra pars compacta and attenuates the oxidative stress induced by calcium entry into the neurons via L-type channels during pacemaking. Regulates astrocyte inflammatory responses, may modulate lipid rafts-dependent endocytosis in astrocytes and neuronal cells. In pancreatic islets, involved in the maintenance of mitochondrial reactive oxygen species (ROS) levels and glucose homeostasis in an age- and diet dependent manner. Protects pancreatic beta cells from cell death induced by inflammatory and cytotoxic setting. Binds to a number of mRNAs containing multiple copies of GG or CC motifs and partially inhibits their translation but dissociates following oxidative stress. Metal-binding protein able to bind copper as well as toxic mercury ions, enhances the cell protection mechanism against induced metal toxicity. In macrophages, interacts with the NADPH oxidase subunit NCF1 to direct NADPH oxidase-dependent ROS production, and protects against sepsis. This Chlorocebus aethiops (Green monkey) protein is Parkinson disease protein 7 homolog.